Consider the following 105-residue polypeptide: uncharacterized protein (105 aa).

Positions Met1–Gly24 are cleaved as a signal peptide.

This is an uncharacterized protein from Saccharomyces cerevisiae (strain ATCC 204508 / S288c) (Baker's yeast).